A 634-amino-acid polypeptide reads, in one-letter code: Chaperone protein HtpG (634 aa).

Residues 1-342 (MTVETDKQTL…SSDLSLNVSR (342 aa)) are a; substrate-binding. The b stretch occupies residues 343 to 559 (EILQSGPVVD…QGDLGLQMRQ (217 aa)). The c stretch occupies residues 560 to 634 (LLEASGQAVP…LNKLLLELSA (75 aa)).

Belongs to the heat shock protein 90 family. As to quaternary structure, homodimer.

The protein resides in the cytoplasm. Its function is as follows. Molecular chaperone. Has ATPase activity. The protein is Chaperone protein HtpG of Xanthomonas axonopodis pv. citri (strain 306).